Reading from the N-terminus, the 146-residue chain is Putative pre-16S rRNA nuclease (146 aa).

This sequence belongs to the YqgF nuclease family.

It is found in the cytoplasm. Functionally, could be a nuclease involved in processing of the 5'-end of pre-16S rRNA. The chain is Putative pre-16S rRNA nuclease from Pseudomonas savastanoi pv. phaseolicola (strain 1448A / Race 6) (Pseudomonas syringae pv. phaseolicola (strain 1448A / Race 6)).